The sequence spans 199 residues: ATP synthase subunit a (199 aa).

6 helical membrane passes run 2–22 (TNVY…LFYF), 25–45 (SMLG…FSYT), 53–73 (VISV…YFMY), 80–100 (MIEF…LTFI), 143–163 (VNVL…ELYL), and 164–184 (GIFY…VFFI).

The protein belongs to the ATPase A chain family. As to quaternary structure, F-type ATPases have 2 components, CF(1) - the catalytic core - and CF(0) - the membrane proton channel. CF(1) has five subunits: alpha(3), beta(3), gamma(1), delta(1), epsilon(1). CF(0) has three main subunits: a, b and c.

It is found in the mitochondrion inner membrane. Mitochondrial membrane ATP synthase (F(1)F(0) ATP synthase or Complex V) produces ATP from ADP in the presence of a proton gradient across the membrane which is generated by electron transport complexes of the respiratory chain. F-type ATPases consist of two structural domains, F(1) - containing the extramembraneous catalytic core and F(0) - containing the membrane proton channel, linked together by a central stalk and a peripheral stalk. During catalysis, ATP synthesis in the catalytic domain of F(1) is coupled via a rotary mechanism of the central stalk subunits to proton translocation. Key component of the proton channel; it may play a direct role in the translocation of protons across the membrane. The protein is ATP synthase subunit a (ATP6) of Ascaris suum (Pig roundworm).